Here is a 357-residue protein sequence, read N- to C-terminus: Anthranilate phosphoribosyltransferase (357 aa).

5-phospho-alpha-D-ribose 1-diphosphate-binding positions include Gly94, 97–98, Thr102, 104–107, 122–130, and Gly134; these read GD, NLST, and KHGNRAASS. Gly94 provides a ligand contact to anthranilate. A Mg(2+)-binding site is contributed by Ser106. Asn125 contributes to the anthranilate binding site. Arg180 lines the anthranilate pocket. Mg(2+) is bound by residues Asp238 and Glu239.

It belongs to the anthranilate phosphoribosyltransferase family. In terms of assembly, homodimer. Mg(2+) is required as a cofactor.

It carries out the reaction N-(5-phospho-beta-D-ribosyl)anthranilate + diphosphate = 5-phospho-alpha-D-ribose 1-diphosphate + anthranilate. Its pathway is amino-acid biosynthesis; L-tryptophan biosynthesis; L-tryptophan from chorismate: step 2/5. In terms of biological role, catalyzes the transfer of the phosphoribosyl group of 5-phosphorylribose-1-pyrophosphate (PRPP) to anthranilate to yield N-(5'-phosphoribosyl)-anthranilate (PRA). This chain is Anthranilate phosphoribosyltransferase, found in Mycobacterium sp. (strain KMS).